The sequence spans 338 residues: 3-phosphoshikimate 1-carboxyvinyltransferase 2 (338 aa).

Residue arginine 25 participates in phosphoenolpyruvate binding. 3-phosphoshikimate contacts are provided by serine 72, serine 73, glutamine 74, serine 100, aspartate 225, and lysine 252. Glutamine 74 contributes to the phosphoenolpyruvate binding site. The active-site Proton acceptor is aspartate 225. Residues arginine 256, arginine 298, and lysine 323 each coordinate phosphoenolpyruvate.

It belongs to the EPSP synthase family.

Its subcellular location is the plastid. It is found in the chloroplast. The catalysed reaction is 3-phosphoshikimate + phosphoenolpyruvate = 5-O-(1-carboxyvinyl)-3-phosphoshikimate + phosphate. It participates in metabolic intermediate biosynthesis; chorismate biosynthesis; chorismate from D-erythrose 4-phosphate and phosphoenolpyruvate: step 6/7. Its function is as follows. Catalyzes the transfer of the enolpyruvyl moiety of phosphoenolpyruvate (PEP) to the 5-hydroxyl of shikimate-3-phosphate (S3P) to produce enolpyruvyl shikimate-3-phosphate and inorganic phosphate. This chain is 3-phosphoshikimate 1-carboxyvinyltransferase 2 (EPSPS-2), found in Nicotiana tabacum (Common tobacco).